We begin with the raw amino-acid sequence, 337 residues long: Ferrochelatase (337 aa).

2 residues coordinate Fe cation: His189 and Glu293.

Belongs to the ferrochelatase family.

It localises to the cytoplasm. The enzyme catalyses heme b + 2 H(+) = protoporphyrin IX + Fe(2+). It functions in the pathway porphyrin-containing compound metabolism; protoheme biosynthesis; protoheme from protoporphyrin-IX: step 1/1. Functionally, catalyzes the ferrous insertion into protoporphyrin IX. The sequence is that of Ferrochelatase from Pseudomonas entomophila (strain L48).